The sequence spans 99 residues: Translation initiation factor 1A (99 aa).

In terms of domain architecture, S1-like spans 11-84; it reads RRVRTPRRGE…EKADIVWRYT (74 aa).

The protein belongs to the eIF-1A family.

Seems to be required for maximal rate of protein biosynthesis. Enhances ribosome dissociation into subunits and stabilizes the binding of the initiator Met-tRNA(I) to 40 S ribosomal subunits. In Methanothermobacter thermautotrophicus (strain ATCC 29096 / DSM 1053 / JCM 10044 / NBRC 100330 / Delta H) (Methanobacterium thermoautotrophicum), this protein is Translation initiation factor 1A (eIF1A).